A 453-amino-acid polypeptide reads, in one-letter code: Elongation factor 1-alpha (453 aa).

A tr-type G domain is found at 5–230 (KTHINIVVIG…DAIVEPKRPH (226 aa)). A G1 region spans residues 14-21 (GHVDAGKS). 14 to 21 (GHVDAGKS) provides a ligand contact to GTP. Residues 70–74 (GITID) form a G2 region. A G3 region spans residues 91-94 (DAPG). GTP contacts are provided by residues 91–95 (DAPGH) and 153–156 (NKMD). The interval 153–156 (NKMD) is G4. The interval 194–196 (SGW) is G5.

The protein belongs to the TRAFAC class translation factor GTPase superfamily. Classic translation factor GTPase family. EF-Tu/EF-1A subfamily. In terms of assembly, binds to actin.

Its subcellular location is the cytoplasm. This protein promotes the GTP-dependent binding of aminoacyl-tRNA to the A-site of ribosomes during protein biosynthesis. It is also an abundant actin filament bundling protein. The protein is Elongation factor 1-alpha (eef1a2) of Dictyostelium discoideum (Social amoeba).